Reading from the N-terminus, the 133-residue chain is uncharacterized protein (133 aa).

Belongs to the mimivirus L87/L94 family.

This is an uncharacterized protein from Acanthamoeba polyphaga mimivirus (APMV).